A 314-amino-acid chain; its full sequence is Methionyl-tRNA formyltransferase (314 aa).

Position 110-113 (110-113) interacts with (6S)-5,6,7,8-tetrahydrofolate; that stretch reads SLLP.

Belongs to the Fmt family.

The enzyme catalyses L-methionyl-tRNA(fMet) + (6R)-10-formyltetrahydrofolate = N-formyl-L-methionyl-tRNA(fMet) + (6S)-5,6,7,8-tetrahydrofolate + H(+). Attaches a formyl group to the free amino group of methionyl-tRNA(fMet). The formyl group appears to play a dual role in the initiator identity of N-formylmethionyl-tRNA by promoting its recognition by IF2 and preventing the misappropriation of this tRNA by the elongation apparatus. This chain is Methionyl-tRNA formyltransferase, found in Bacillus cereus (strain AH187).